The primary structure comprises 891 residues: MAVTNVAELNALVERVKKAQREYASFTQEQVDKIFRAAALAAADARIPLAKMAVAESGMGIVEDKVIKNHFASEYIYNAYKDEKTCGVLSEDDTFGTITIAEPIGIICGIVPTTNPTSTAIFKSLISLKTRNAIIFSPHPRAKDATNKAADIVLQAAIAAGAPKDLIGWIDQPSVELSNALMHHPDINLILATGGPGMVKAAYSSGKPAIGVGAGNTPVVIDETADIKRAVASVLMSKTFDNGVICASEQSVVVVDSVYDAVRERFATHGGYLLQGKELKAVQDVILKNGALNAAIVGQPAYKIAELAGFSVPENTKILIGEVTVVDESEPFAHEKLSPTLAMYRAKDFEDAVEKAEKLVAMGGIGHTSCLYTDQDNQPARVSYFGQKMKTARILINTPASQGGIGDLYNFKLAPSLTLGCGSWGGNSISENVGPKHLINKKTVAKRAENMLWHKLPKSIYFRRGSLPIALDEVITDGHKRALIVTDRFLFNNGYADQITSVLKAAGVETEVFFEVEADPTLSIVRKGAELANSFKPDVIIALGGGSPMDAAKIMWVMYEHPETHFEELALRFMDIRKRIYKFPKMGVKAKMIAVTTTSGTGSEVTPFAVVTDDATGQKYPLADYALTPDMAIVDANLVMDMPKSLCAFGGLDAVTHAMEAYVSVLASEFSDGQALQALKLLKEYLPASYHEGSKNPVARERVHSAATIAGIAFANAFLGVCHSMAHKLGSQFHIPHGLANALLICNVIRYNANDNPTKQTAFSQYDRPQARRRYAEIADHLGLSAPGDRTAAKIEKLLAWLETLKAELGIPKSIREAGVQEADFLANVDKLSEDAFDDQCTGANPRYPLISELKQILLDTYYGRDYVEGETAAKKEAAPAKAEKKAKKSA.

An aldehyde dehydrogenase region spans residues 2 to 440 (AVTNVAELNA…ENVGPKHLIN (439 aa)). Residues 110–115 (IVPTTN), Gly195, and Gly213 contribute to the NAD(+) site. The active-site Nucleophile is Cys246. Residues Glu335 and Leu419 each coordinate NAD(+). Positions 441–448 (KKTVAKRA) are linker. Residues 449 to 891 (ENMLWHKLPK…KAEKKAKKSA (443 aa)) are alcohol dehydrogenase. NAD(+) is bound by residues Asp487, Asp519, 546–550 (GSPMD), 597–598 (TT), Val610, Lys619, and Leu638. Fe cation is bound by residues Asp653, His657, His723, and His737.

In the N-terminal section; belongs to the aldehyde dehydrogenase family. The protein in the C-terminal section; belongs to the iron-containing alcohol dehydrogenase family. Forms long filaments, called spirosomes. Fe(2+) is required as a cofactor.

The enzyme catalyses acetaldehyde + NAD(+) + CoA = acetyl-CoA + NADH + H(+). The catalysed reaction is ethanol + NAD(+) = acetaldehyde + NADH + H(+). It carries out the reaction a primary alcohol + NAD(+) = an aldehyde + NADH + H(+). Under fermentative conditions, catalyzes the sequential NADH-dependent reduction of acetyl-CoA to acetaldehyde and then to ethanol. Plays an important role in virulence and is critical for proper regulation of virulence gene expression. In Escherichia coli O157:H7, this protein is Bifunctional aldehyde-alcohol dehydrogenase AdhE.